We begin with the raw amino-acid sequence, 244 residues long: Leucyl/phenylalanyl-tRNA--protein transferase (244 aa).

The protein belongs to the L/F-transferase family.

It is found in the cytoplasm. The catalysed reaction is N-terminal L-lysyl-[protein] + L-leucyl-tRNA(Leu) = N-terminal L-leucyl-L-lysyl-[protein] + tRNA(Leu) + H(+). It catalyses the reaction N-terminal L-arginyl-[protein] + L-leucyl-tRNA(Leu) = N-terminal L-leucyl-L-arginyl-[protein] + tRNA(Leu) + H(+). It carries out the reaction L-phenylalanyl-tRNA(Phe) + an N-terminal L-alpha-aminoacyl-[protein] = an N-terminal L-phenylalanyl-L-alpha-aminoacyl-[protein] + tRNA(Phe). Functionally, functions in the N-end rule pathway of protein degradation where it conjugates Leu, Phe and, less efficiently, Met from aminoacyl-tRNAs to the N-termini of proteins containing an N-terminal arginine or lysine. In Thermodesulfovibrio yellowstonii (strain ATCC 51303 / DSM 11347 / YP87), this protein is Leucyl/phenylalanyl-tRNA--protein transferase.